A 34-amino-acid polypeptide reads, in one-letter code: uncharacterized protein (34 aa).

Residues 1–12 (MFSHFEVSENRP) show a composition bias toward basic and acidic residues. Residues 1 to 21 (MFSHFEVSENRPRKQPRRKRI) form a disordered region.

This is an uncharacterized protein from Saccharomyces cerevisiae (strain ATCC 204508 / S288c) (Baker's yeast).